Reading from the N-terminus, the 515-residue chain is Protein disulfide-isomerase (515 aa).

A signal peptide spans 1–25; that stretch reads MAISKVWISLLLALAVVLSAPAARA. The Thioredoxin 1 domain occupies 26 to 150; it reads EEAAAAEEAA…IVEYLKKQVG (125 aa). Active-site nucleophile residues include Cys-68 and Cys-71. Cys-68 and Cys-71 are disulfide-bonded. A glycan (N-linked (GlcNAc...) asparagine) is linked at Asn-283. The 144-residue stretch at 346 to 489 folds into the Thioredoxin 2 domain; sequence LKEQVEAGQI…IVDYIKKNKE (144 aa). Residues Cys-412 and Cys-415 each act as nucleophile in the active site. An intrachain disulfide couples Cys-412 to Cys-415. Residues 494-509 are compositionally biased toward low complexity; the sequence is AAAAATEKAAEPAATE. A disordered region spans residues 494 to 515; it reads AAAAATEKAAEPAATEPLKDEL. Residues 512 to 515 carry the Prevents secretion from ER motif; that stretch reads KDEL.

It belongs to the protein disulfide isomerase family.

The protein localises to the endoplasmic reticulum lumen. It catalyses the reaction Catalyzes the rearrangement of -S-S- bonds in proteins.. Its function is as follows. Participates in the folding of proteins containing disulfide bonds, may be involved in glycosylation, prolyl hydroxylation and triglyceride transfer. The polypeptide is Protein disulfide-isomerase (PDI) (Triticum aestivum (Wheat)).